The primary structure comprises 241 residues: Platelet-derived growth factor subunit B (241 aa).

Residues 1-20 (MNRCWALFLSLCCYLRLVSA) form the signal peptide. Residues 21 to 81 (EGDPIPEELY…ELESLSRGRR (61 aa)) constitute a propeptide, removed in mature form. Asn63 carries an N-linked (GlcNAc...) asparagine glycan. Cystine bridges form between Cys97-Cys141, Cys130-Cys178, and Cys134-Cys180. Positions 191-241 (TPGSSQEQRAARTPQTRVTIRTVRVRRPPKGKHRKFKHTHDKTALKETLGA) are cleaved as a propeptide — removed in mature form. Positions 217-230 (RPPKGKHRKFKHTH) are enriched in basic residues. Residues 217-241 (RPPKGKHRKFKHTHDKTALKETLGA) are disordered.

This sequence belongs to the PDGF/VEGF growth factor family. As to quaternary structure, antiparallel homodimer; disulfide-linked. Antiparallel heterodimer with PDGFA; disulfide-linked. The PDGFB homodimer interacts with PDGFRA and PDGFRB homodimers, and with heterodimers formed by PDGFRA and PDGFRB. The heterodimer composed of PDGFA and PDGFB interacts with PDGFRB homodimers, and with heterodimers formed by PDGFRA and PDGFRB. Interacts with XLKD1. Interacts with LRP1. Interacts with SORL1 (via the N-terminal ectodomain). Interacts with CD82; this interaction inhibits PDGFB-mediated signaling pathway.

Its subcellular location is the secreted. Functionally, growth factor that plays an essential role in the regulation of embryonic development, cell proliferation, cell migration, survival and chemotaxis. Potent mitogen for cells of mesenchymal origin. Required for normal proliferation and recruitment of pericytes and vascular smooth muscle cells in the central nervous system, skin, lung, heart and placenta. Required for normal blood vessel development, and for normal development of kidney glomeruli. Plays an important role in wound healing. Signaling is modulated by the formation of heterodimers with PDGFA. The protein is Platelet-derived growth factor subunit B (PDGFB) of Ovis aries (Sheep).